A 296-amino-acid polypeptide reads, in one-letter code: Iron-sulfur cluster carrier protein (296 aa).

Residues 1–17 are compositionally biased toward low complexity; the sequence is MSSNPFRIQNPQPQPQR. The interval 1 to 23 is disordered; it reads MSSNPFRIQNPQPQPQRQPRDLR. Residue 52-59 participates in ATP binding; the sequence is GKGGVGKS.

The protein belongs to the Mrp/NBP35 ATP-binding proteins family. Homodimer.

In terms of biological role, binds and transfers iron-sulfur (Fe-S) clusters to target apoproteins. Can hydrolyze ATP. This chain is Iron-sulfur cluster carrier protein, found in Saccharolobus solfataricus (strain ATCC 35092 / DSM 1617 / JCM 11322 / P2) (Sulfolobus solfataricus).